The sequence spans 912 residues: Protein translocase subunit SecA (912 aa).

ATP contacts are provided by residues Q87, 105-109, and D508; that span reads GEGKT. The tract at residues 865–912 is disordered; sequence DEEAAQVQSGNAPLPVSQVTRDEPKVGRNDPCPCGSGKKYKHCHGQLS. Zn(2+) contacts are provided by C896, C898, C907, and H908. Basic residues predominate over residues 902–912; the sequence is KKYKHCHGQLS.

Belongs to the SecA family. In terms of assembly, monomer and homodimer. Part of the essential Sec protein translocation apparatus which comprises SecA, SecYEG and auxiliary proteins SecDF-YajC and YidC. It depends on Zn(2+) as a cofactor.

Its subcellular location is the cell inner membrane. The protein resides in the cytoplasm. It catalyses the reaction ATP + H2O + cellular proteinSide 1 = ADP + phosphate + cellular proteinSide 2.. In terms of biological role, part of the Sec protein translocase complex. Interacts with the SecYEG preprotein conducting channel. Has a central role in coupling the hydrolysis of ATP to the transfer of proteins into and across the cell membrane, serving both as a receptor for the preprotein-SecB complex and as an ATP-driven molecular motor driving the stepwise translocation of polypeptide chains across the membrane. The sequence is that of Protein translocase subunit SecA from Xanthomonas oryzae pv. oryzae (strain PXO99A).